The chain runs to 1020 residues: Probable beta-galactosidase B (1020 aa).

A signal peptide spans Met1–Ala22. Asn25 carries N-linked (GlcNAc...) asparagine glycosylation. Tyr90 contributes to the substrate binding site. An N-linked (GlcNAc...) asparagine glycan is attached at Asn111. Substrate is bound by residues Asn135, Ala136, and Glu137. Asn172 is a glycosylation site (N-linked (GlcNAc...) asparagine). A substrate-binding site is contributed by Asn195. Residue Glu196 is the Proton donor of the active site. Asn210 and Asn251 each carry an N-linked (GlcNAc...) asparagine glycan. Substrate is bound at residue Tyr264. Cys270 and Cys323 are joined by a disulfide. Asn271 carries an N-linked (GlcNAc...) asparagine glycan. Glu307 serves as the catalytic Nucleophile. Residue Tyr372 coordinates substrate. Asn410, Asn455, Asn549, Asn596, Asn625, Asn702, Asn747, Asn785, Asn819, Asn880, and Asn919 each carry an N-linked (GlcNAc...) asparagine glycan.

It belongs to the glycosyl hydrolase 35 family.

Its subcellular location is the secreted. It catalyses the reaction Hydrolysis of terminal non-reducing beta-D-galactose residues in beta-D-galactosides.. Functionally, cleaves beta-linked terminal galactosyl residues from gangliosides, glycoproteins, and glycosaminoglycans. The polypeptide is Probable beta-galactosidase B (lacB) (Aspergillus flavus (strain ATCC 200026 / FGSC A1120 / IAM 13836 / NRRL 3357 / JCM 12722 / SRRC 167)).